The primary structure comprises 356 residues: ATP-dependent 6-phosphofructokinase (356 aa).

Residues glycine 15, 78 to 79 (KG), and 115 to 118 (GEGT) each bind ATP. A Mg(2+)-binding site is contributed by glutamate 116. Substrate-binding positions include 138-140 (TID), arginine 175, 182-184 (MGR), glutamate 235, arginine 272, and 278-281 (HLQR). The Proton acceptor role is filled by aspartate 140.

It belongs to the phosphofructokinase type A (PFKA) family. Mixed-substrate PFK group III subfamily. Homodimer or homotetramer. It depends on Mg(2+) as a cofactor.

The protein resides in the cytoplasm. It carries out the reaction beta-D-fructose 6-phosphate + ATP = beta-D-fructose 1,6-bisphosphate + ADP + H(+). It functions in the pathway carbohydrate degradation; glycolysis; D-glyceraldehyde 3-phosphate and glycerone phosphate from D-glucose: step 3/4. In terms of biological role, catalyzes the phosphorylation of D-fructose 6-phosphate to fructose 1,6-bisphosphate by ATP, the first committing step of glycolysis. The sequence is that of ATP-dependent 6-phosphofructokinase from Chloroflexus aurantiacus (strain ATCC 29366 / DSM 635 / J-10-fl).